We begin with the raw amino-acid sequence, 491 residues long: E3 ubiquitin-protein ligase Mdm2 (491 aa).

The interval methionine 1–threonine 101 is sufficient to promote the mitochondrial pathway of apoptosis. A necessary for interaction with USP2 region spans residues methionine 1–valine 110. An SWIB/MDM2 domain is found at threonine 26–valine 109. The interval glutamate 141–aspartate 187 is disordered. Residues serine 149–serine 159 show a composition bias toward polar residues. An interaction with PYHIN1 and necessary for interaction with RFFL and RNF34 region spans residues serine 150–glutamate 230. Residue serine 166 is modified to Phosphoserine; by SGK1. The interaction with MTBP stretch occupies residues glutamate 170–threonine 306. The short motif at arginine 179–lysine 185 is the Nuclear localization signal element. Serine 190 carries the phosphoserine modification. Residues serine 190–isoleucine 202 carry the Nuclear export signal motif. The segment at serine 210–lysine 304 is ARF-binding. Residues serine 211–aspartate 237 are disordered. The tract at residues aspartate 223 to serine 232 is interaction with USP7. 5 positions are modified to phosphoserine: serine 240, serine 242, serine 246, serine 260, and serine 262. The segment at serine 242 to proline 331 is region II. Residues serine 253–glutamate 274 are disordered. A necessary for interaction with USP2 region spans residues tyrosine 276–proline 491. Residues leucine 299–asparagine 328 form a RanBP2-type zinc finger. Residues cysteine 305, cysteine 308, cysteine 319, and cysteine 322 each coordinate Zn(2+). A disordered region spans residues arginine 371 to glutamate 427. Phosphoserine; by ATM is present on residues serine 386, serine 395, and serine 407. The span at tyrosine 394–glutamine 408 shows a compositional bias: low complexity. A compositionally biased stretch (basic and acidic residues) spans glutamate 409–serine 425. Residue threonine 419 is modified to Phosphothreonine; by ATM. Residues serine 425 and serine 429 each carry the phosphoserine; by ATM modification. Residues cysteine 438–arginine 479 form an RING-type zinc finger. Residues lysine 466 to lysine 473 carry the Nucleolar localization signal motif.

It belongs to the MDM2/MDM4 family. Interacts with p53/TP53, TP73/p73, RBL5 and RP11. Binds specifically to RNA. Can interact with RB1, E1A-associated protein EP300 and the E2F1 transcription factor. Forms a ternary complex with p53/TP53 and WWOX. Interacts with CDKN2AIP, RFWD3, USP7, PYHIN1, and RBBP6. Interacts with ARRB1 and ARRB2. Interacts with PSMA3. Found in a trimeric complex with MDM2, MDM4 and USP2. Interacts with USP2 (via N-terminus and C-terminus). Interacts with MDM4. Part of a complex with MDM2, DAXX, RASSF1 and USP7. Part of a complex with DAXX, MDM2 and USP7. Interacts directly with DAXX and USP7. Interacts (via C-terminus) with RASSF1 isoform A (via N-terminus); the interaction is independent of TP53. Interacts with APEX1; leading to its ubiquitination and degradation. Interacts with RYBP; this inhibits ubiquitination of TP53. Identified in a complex with RYBP and p53/TP53. Also a component of the TRIM28/KAP1-MDM2-p53/TP53 complex involved in regulating p53/TP53 stabilization and activity. Binds directly both p53/TP53 and TRIM28. Component of the TRIM28/KAP1-ERBB4-MDM2 complex involved in connecting growth factor responses with DNA damage. Interacts directly with both TRIM28 and ERBB4 in the complex. Interacts with DYRK2. Interacts with IGF1R. Interacts with TRIM13; the interaction ubiquitinates MDM2 leading to its proteasomal degradation. Interacts with SNAI1; this interaction promotes SNAI1 ubiquitination. Interacts with NOTCH1 (via intracellular domain). Interacts with FHIT. Interacts with RFFL and RNF34; the interaction stabilizes MDM2. Interacts with CDK5RAP3 and CDKN2A/ARF; form a ternary complex involved in regulation of p53/TP53. Interacts with MTA1. Interacts with AARB2. Interacts with MTBP. Interacts with PML. Interacts with TBRG1. Interacts (via its RanBP2-type zinc finger domain) with RPL11 in the 5S RNP complex composed of 5S RNA, RPL5 and RPL11; this interaction occurs in the nucleoplasm and negatively regulates MDM2-mediated TP53 ubiquitination and degradation. Interacts with ADGRB1; the interaction results in inhibition of MDM2-mediated ubiquitination and degradation of DLG4/PSD95, promoting DLG4 stability and regulating synaptic plasticity. Interacts with RPL23A; this interaction may promote p53/TP53 polyubiquitination. Interacts with NDUFS1. Interacts with MORN3; the interaction enhances the ubiquitination of p53/TP53. As to quaternary structure, (Microbial infection) Interacts with herpes virus 8 protein v-IRF4. In terms of assembly, (Microbial infection) Interacts with and ubiquitinates HIV-1 Tat. Post-translationally, phosphorylation on Ser-166 by SGK1 activates ubiquitination of p53/TP53. Phosphorylated at multiple sites near the RING domain by ATM upon DNA damage; this promotes its ubiquitination and degradation, preventing p53/TP53 degradation. Autoubiquitination leads to proteasomal degradation; resulting in p53/TP53 activation it may be regulated by SFN. Also ubiquitinated by TRIM13. ATM-phosphorylated MDM2 is ubiquitinated by the SCF(FBXO31) complex in response to genotoxic stress, promoting its degradation and p53/TP53-mediated DNA damage response. Deubiquitinated by USP2 leads to its accumulation and increases deubiquitination and degradation of p53/TP53. Deubiquitinated by USP7 leading to its stabilization. As to expression, ubiquitous. Isoform Mdm2-A, isoform Mdm2-B, isoform Mdm2-C, isoform Mdm2-D, isoform Mdm2-E, isoform Mdm2-F and isoform Mdm2-G are observed in a range of cancers but absent in normal tissues.

It localises to the nucleus. It is found in the nucleoplasm. The protein localises to the cytoplasm. Its subcellular location is the nucleolus. The enzyme catalyses S-ubiquitinyl-[E2 ubiquitin-conjugating enzyme]-L-cysteine + [acceptor protein]-L-lysine = [E2 ubiquitin-conjugating enzyme]-L-cysteine + N(6)-ubiquitinyl-[acceptor protein]-L-lysine.. Its function is as follows. E3 ubiquitin-protein ligase that mediates ubiquitination of p53/TP53, leading to its degradation by the proteasome. Inhibits p53/TP53- and p73/TP73-mediated cell cycle arrest and apoptosis by binding its transcriptional activation domain. Also acts as a ubiquitin ligase E3 toward itself and ARRB1. Permits the nuclear export of p53/TP53. Promotes proteasome-dependent ubiquitin-independent degradation of retinoblastoma RB1 protein. Inhibits DAXX-mediated apoptosis by inducing its ubiquitination and degradation. Component of the TRIM28/KAP1-MDM2-p53/TP53 complex involved in stabilizing p53/TP53. Also a component of the TRIM28/KAP1-ERBB4-MDM2 complex which links growth factor and DNA damage response pathways. Mediates ubiquitination and subsequent proteasome degradation of DYRK2 in nucleus. Ubiquitinates IGF1R and SNAI1 and promotes them to proteasomal degradation. Ubiquitinates DCX, leading to DCX degradation and reduction of the dendritic spine density of olfactory bulb granule cells. Ubiquitinates DLG4, leading to proteasomal degradation of DLG4 which is required for AMPA receptor endocytosis. Negatively regulates NDUFS1, leading to decreased mitochondrial respiration, marked oxidative stress, and commitment to the mitochondrial pathway of apoptosis. Binds NDUFS1 leading to its cytosolic retention rather than mitochondrial localization resulting in decreased supercomplex assembly (interactions between complex I and complex III), decreased complex I activity, ROS production, and apoptosis. The chain is E3 ubiquitin-protein ligase Mdm2 (MDM2) from Homo sapiens (Human).